We begin with the raw amino-acid sequence, 159 residues long: Ribosomal RNA large subunit methyltransferase H (159 aa).

S-adenosyl-L-methionine contacts are provided by residues Leu-76, Gly-108, and 127-132 (FSKMTF).

This sequence belongs to the RNA methyltransferase RlmH family. In terms of assembly, homodimer.

It is found in the cytoplasm. It catalyses the reaction pseudouridine(1915) in 23S rRNA + S-adenosyl-L-methionine = N(3)-methylpseudouridine(1915) in 23S rRNA + S-adenosyl-L-homocysteine + H(+). Functionally, specifically methylates the pseudouridine at position 1915 (m3Psi1915) in 23S rRNA. This chain is Ribosomal RNA large subunit methyltransferase H, found in Geobacillus thermodenitrificans (strain NG80-2).